An 81-amino-acid chain; its full sequence is Apolipoprotein C-I, acidic form (81 aa).

Residues methionine 1–glycine 24 form the signal peptide.

Belongs to the apolipoprotein C1 family.

The protein localises to the secreted. The polypeptide is Apolipoprotein C-I, acidic form (APOC1A) (Theropithecus gelada (Gelada baboon)).